The primary structure comprises 175 residues: ATP-dependent protease subunit HslV (175 aa).

Threonine 2 is a catalytic residue. Residues glycine 158, cysteine 161, and threonine 164 each contribute to the Na(+) site.

This sequence belongs to the peptidase T1B family. HslV subfamily. As to quaternary structure, a double ring-shaped homohexamer of HslV is capped on each side by a ring-shaped HslU homohexamer. The assembly of the HslU/HslV complex is dependent on binding of ATP.

It is found in the cytoplasm. It carries out the reaction ATP-dependent cleavage of peptide bonds with broad specificity.. Allosterically activated by HslU binding. Protease subunit of a proteasome-like degradation complex believed to be a general protein degrading machinery. In Haemophilus influenzae (strain PittEE), this protein is ATP-dependent protease subunit HslV.